We begin with the raw amino-acid sequence, 63 residues long: Large ribosomal subunit protein bL28 (63 aa).

Belongs to the bacterial ribosomal protein bL28 family.

The sequence is that of Large ribosomal subunit protein bL28 from Alkaliphilus metalliredigens (strain QYMF).